Here is a 65-residue protein sequence, read N- to C-terminus: Small ribosomal subunit protein bS21 (65 aa).

It belongs to the bacterial ribosomal protein bS21 family.

In Acidobacterium capsulatum (strain ATCC 51196 / DSM 11244 / BCRC 80197 / JCM 7670 / NBRC 15755 / NCIMB 13165 / 161), this protein is Small ribosomal subunit protein bS21.